We begin with the raw amino-acid sequence, 421 residues long: U-box domain-containing protein 26 (421 aa).

Residues 13 to 87 (QIPYHFRCPI…QEWCVANRSN (75 aa)) form the U-box domain.

It catalyses the reaction S-ubiquitinyl-[E2 ubiquitin-conjugating enzyme]-L-cysteine + [acceptor protein]-L-lysine = [E2 ubiquitin-conjugating enzyme]-L-cysteine + N(6)-ubiquitinyl-[acceptor protein]-L-lysine.. It functions in the pathway protein modification; protein ubiquitination. Functionally, functions as an E3 ubiquitin ligase. This is U-box domain-containing protein 26 (PUB26) from Arabidopsis thaliana (Mouse-ear cress).